Reading from the N-terminus, the 339-residue chain is tRNA N6-adenosine threonylcarbamoyltransferase (339 aa).

Positions 112 and 116 each coordinate Fe cation. Substrate-binding positions include 135-139 (LVSGG), Asp168, Gly181, and Asn273. Position 301 (Asp301) interacts with Fe cation.

This sequence belongs to the KAE1 / TsaD family. The cofactor is Fe(2+).

It is found in the cytoplasm. It catalyses the reaction L-threonylcarbamoyladenylate + adenosine(37) in tRNA = N(6)-L-threonylcarbamoyladenosine(37) in tRNA + AMP + H(+). Its function is as follows. Required for the formation of a threonylcarbamoyl group on adenosine at position 37 (t(6)A37) in tRNAs that read codons beginning with adenine. Is involved in the transfer of the threonylcarbamoyl moiety of threonylcarbamoyl-AMP (TC-AMP) to the N6 group of A37, together with TsaE and TsaB. TsaD likely plays a direct catalytic role in this reaction. In Coxiella burnetii (strain RSA 493 / Nine Mile phase I), this protein is tRNA N6-adenosine threonylcarbamoyltransferase.